The sequence spans 501 residues: ATP synthase subunit beta (501 aa).

153-160 provides a ligand contact to ATP; it reads GGAGVGKT.

Belongs to the ATPase alpha/beta chains family. As to quaternary structure, F-type ATPases have 2 components, CF(1) - the catalytic core - and CF(0) - the membrane proton channel. CF(1) has five subunits: alpha(3), beta(3), gamma(1), delta(1), epsilon(1). CF(0) has three main subunits: a(1), b(2) and c(9-12). The alpha and beta chains form an alternating ring which encloses part of the gamma chain. CF(1) is attached to CF(0) by a central stalk formed by the gamma and epsilon chains, while a peripheral stalk is formed by the delta and b chains.

Its subcellular location is the cell inner membrane. It catalyses the reaction ATP + H2O + 4 H(+)(in) = ADP + phosphate + 5 H(+)(out). In terms of biological role, produces ATP from ADP in the presence of a proton gradient across the membrane. The catalytic sites are hosted primarily by the beta subunits. This Cytophaga hutchinsonii (strain ATCC 33406 / DSM 1761 / CIP 103989 / NBRC 15051 / NCIMB 9469 / D465) protein is ATP synthase subunit beta.